The chain runs to 239 residues: Prolyl hydroxylase EGLN3 (239 aa).

A beta(2)beta(3) 'finger-like' loop region spans residues alanine 62 to leucine 73. Residues cysteine 88–tyrosine 104 are required for interaction with ADRB2. Positions glutamate 116–aspartate 214 constitute a Fe2OG dioxygenase domain. The Fe cation site is built by histidine 135, aspartate 137, and histidine 196. 2-oxoglutarate is bound at residue arginine 205.

In terms of assembly, interacts with ADRB2; the interaction hydroxylates ADRB2 facilitating its ubiquitination by the VHL-E3 ligase complex. Interacts with PAX2; the interaction targets PAX2 for destruction. Interacts with PKM; the interaction hydroxylates PKM in hypoxia. Interacts with WDR83; the interaction leads to almost complete elimination of HIF-mediated reporter activity. Interacts with BCL2 (via its BH4 domain); the interaction disrupts the BAX-BCL4 complex inhibiting the anti-apoptotic activity of BCL2. Fe(2+) serves as cofactor. It depends on L-ascorbate as a cofactor. In terms of processing, ubiquitinated by SIAH1 and/or SIAH2 in response to the unfolded protein response (UPR), leading to its degradation. In terms of tissue distribution, highly expressed in vascular smooth muscle. Moderately expressed in esophagus, stomach, small bowel and aorta. Low levels in tail and kidney. Expression also in pheochromocytoma cell line PC-12.

Its subcellular location is the nucleus. It localises to the cytoplasm. The enzyme catalyses L-prolyl-[protein] + 2-oxoglutarate + O2 = trans-4-hydroxy-L-prolyl-[protein] + succinate + CO2. It carries out the reaction L-prolyl-[hypoxia-inducible factor alpha subunit] + 2-oxoglutarate + O2 = trans-4-hydroxy-L-prolyl-[hypoxia-inducible factor alpha subunit] + succinate + CO2. Its function is as follows. Prolyl hydroxylase that mediates hydroxylation of proline residues in target proteins, such as PKM, TELO2, ATF4 and HIF1A. Target proteins are preferentially recognized via a LXXLAP motif. Cellular oxygen sensor that catalyzes, under normoxic conditions, the post-translational formation of 4-hydroxyproline in hypoxia-inducible factor (HIF) alpha proteins. Hydroxylates a specific proline found in each of the oxygen-dependent degradation (ODD) domains (N-terminal, NODD, and C-terminal, CODD) of HIF1A. Also hydroxylates HIF2A. Has a preference for the CODD site for both HIF1A and HIF2A. Hydroxylation on the NODD site by EGLN3 appears to require prior hydroxylation on the CODD site. Hydroxylated HIFs are then targeted for proteasomal degradation via the von Hippel-Lindau ubiquitination complex. Under hypoxic conditions, the hydroxylation reaction is attenuated allowing HIFs to escape degradation resulting in their translocation to the nucleus, heterodimerization with HIF1B, and increased expression of hypoxy-inducible genes. ELGN3 is the most important isozyme in limiting physiological activation of HIFs (particularly HIF2A) in hypoxia. Also hydroxylates PKM in hypoxia, limiting glycolysis. Under normoxia, hydroxylates and regulates the stability of ADRB2. Regulator of cardiomyocyte and neuronal apoptosis. In cardiomyocytes, inhibits the anti-apoptotic effect of BCL2 by disrupting the BAX-BCL2 complex. In neurons, has a NGF-induced proapoptotic effect, probably through regulating CASP3 activity. Also essential for hypoxic regulation of neutrophilic inflammation. Plays a crucial role in DNA damage response (DDR) by hydroxylating TELO2, promoting its interaction with ATR which is required for activation of the ATR/CHK1/p53 pathway. Also mediates hydroxylation of ATF4, leading to decreased protein stability of ATF4. This chain is Prolyl hydroxylase EGLN3 (Egln3), found in Rattus norvegicus (Rat).